Consider the following 257-residue polypeptide: Thiazole synthase (257 aa).

The Schiff-base intermediate with DXP role is filled by lysine 100. 1-deoxy-D-xylulose 5-phosphate contacts are provided by residues glycine 161, alanine 187 to glycine 188, and asparagine 209 to threonine 210.

It belongs to the ThiG family. As to quaternary structure, homotetramer. Forms heterodimers with either ThiH or ThiS.

It is found in the cytoplasm. It catalyses the reaction [ThiS sulfur-carrier protein]-C-terminal-Gly-aminoethanethioate + 2-iminoacetate + 1-deoxy-D-xylulose 5-phosphate = [ThiS sulfur-carrier protein]-C-terminal Gly-Gly + 2-[(2R,5Z)-2-carboxy-4-methylthiazol-5(2H)-ylidene]ethyl phosphate + 2 H2O + H(+). It participates in cofactor biosynthesis; thiamine diphosphate biosynthesis. In terms of biological role, catalyzes the rearrangement of 1-deoxy-D-xylulose 5-phosphate (DXP) to produce the thiazole phosphate moiety of thiamine. Sulfur is provided by the thiocarboxylate moiety of the carrier protein ThiS. In vitro, sulfur can be provided by H(2)S. The polypeptide is Thiazole synthase (Pelagibacter ubique (strain HTCC1062)).